The primary structure comprises 368 residues: Agmatine deiminase (368 aa).

Residue Cys357 is the Amidino-cysteine intermediate of the active site.

The protein belongs to the agmatine deiminase family. Homodimer.

It carries out the reaction agmatine + H2O = N-carbamoylputrescine + NH4(+). Its pathway is amine and polyamine biosynthesis; putrescine biosynthesis via agmatine pathway; N-carbamoylputrescine from agmatine: step 1/1. Mediates the hydrolysis of agmatine into N-carbamoylputrescine in the arginine decarboxylase (ADC) pathway of putrescine biosynthesis, a basic polyamine. The protein is Agmatine deiminase of Pseudomonas fluorescens (strain SBW25).